We begin with the raw amino-acid sequence, 202 residues long: Syndecan-4 (202 aa).

The first 23 residues, 1-23 (MAPVCLFAPLLLLLLGGFPVAPG), serve as a signal peptide directing secretion. Residues 24 to 149 (ESIRETEVID…QGSNIFERTE (126 aa)) are Extracellular-facing. 2 disordered regions span residues 42–76 (YFSGALPDDEDAGGLEQDSDFELSGSGDLDDTEEP) and 89–138 (LDNH…MSST). Ser44 carries an O-linked (Xyl...) (glycosaminoglycan) serine glycan. Residues 48–62 (PDDEDAGGLEQDSDF) are compositionally biased toward acidic residues. O-linked (Xyl...) (glycosaminoglycan) serine glycosylation is found at Ser65 and Ser67. Over residues 105 to 121 (SEPKELEENEVIPKRVP) the composition is skewed to basic and acidic residues. A helical transmembrane segment spans residues 150–174 (VLAALIVGGVVGILFAVFLILLLVY). At 175–202 (RMKKKDEGSYDLGKKPIYKKAPTNEFYA) the chain is on the cytoplasmic side.

It belongs to the syndecan proteoglycan family. Homodimer. Interacts with CDCP1 and SDCBP. Interacts (via its cytoplasmic domain) with GIPC (via its PDZ domain). Interacts (via its cytoplasmic domain) with NUDT16L1. Interacts with DNM2; this interaction is markedly enhanced at focal ahesion site upon induction of focal adhesions and stress-fiber formation. Shedding is enhanced by a number of factors such as heparanase, thrombin or EGF. Also by stress and wound healing. PMA-mediated shedding is inhibited by TIMP3. Post-translationally, O-glycosylated; contains both chondroitin sulfate and heparan sulfate. Ser-44, Ser-65 and Ser-67 can all be modified by either chondroitin sulfate or heparan sulfate, and the protein exists in forms that contain only chondroitin sulfate, only heparan sulfate and both chondroitin sulfate and heparan sulfate.

It is found in the membrane. It localises to the secreted. In terms of biological role, cell surface proteoglycan which regulates exosome biogenesis in concert with SDCBP and PDCD6IP. The sequence is that of Syndecan-4 from Rattus norvegicus (Rat).